Here is a 131-residue protein sequence, read N- to C-terminus: Small ribosomal subunit protein uS11 (131 aa).

It belongs to the universal ribosomal protein uS11 family. As to quaternary structure, part of the 30S ribosomal subunit. Interacts with proteins S7 and S18. Binds to IF-3.

Functionally, located on the platform of the 30S subunit, it bridges several disparate RNA helices of the 16S rRNA. Forms part of the Shine-Dalgarno cleft in the 70S ribosome. The sequence is that of Small ribosomal subunit protein uS11 from Dictyoglomus turgidum (strain DSM 6724 / Z-1310).